Reading from the N-terminus, the 330-residue chain is Aquaporin-3 (330 aa).

Topologically, residues 1–40 (MSATPIIHLRDVKKRTGVLNAWERVRNKPQVHWAMECFAE) are cytoplasmic. Residues 41 to 61 (ALGVFFYVYFGLGSTAAWVIG) traverse the membrane as a helical segment. The Extracellular segment spans residues 62–71 (NILKQSGLSS). The chain crosses the membrane as a helical span at residues 72-92 (VFQIGFAYAFGILFAIGVCAA). At 93-124 (TSGGHFNPCVTIAFTIFRGFPPLKAVRYIVAQ) the chain is on the cytoplasmic side. Positions 99–101 (NPC) match the NPA 1 motif. A helical transmembrane segment spans residues 125–145 (ILGAYIASALVYNQWKVLIVE). The Extracellular portion of the chain corresponds to 146 to 157 (SELLLKQAGVYE). A helical membrane pass occupies residues 158 to 178 (TTMFTPNGPAGIFALYLLPGA). Residues 179-183 (QTLPR) lie on the Cytoplasmic side of the membrane. The chain crosses the membrane as a helical span at residues 184 to 204 (AFLNEFVNCFVLALVIWAALD). Over 205–207 (PTS) the chain is Extracellular. Residues 208 to 228 (FMIPPVMAPFIIAAAYAGSIW) form a helical membrane-spanning segment. Topologically, residues 229–264 (GYAVPAISLNSARDIGCRLFALTIWGKSAAGGSYSA) are cytoplasmic. The short motif at 238 to 240 (NSA) is the NPA 2 element. The chain crosses the membrane as a helical span at residues 265-285 (IAALVNIPATLLAAVVYELFL). Residues 286–330 (VDSDRVVAGSHLEFMNVAANHRRHRQQAEDDNLVEADDSSQEKPV) are Extracellular-facing. The interval 308 to 330 (RHRQQAEDDNLVEADDSSQEKPV) is disordered. Over residues 314 to 324 (EDDNLVEADDS) the composition is skewed to acidic residues.

The protein belongs to the MIP/aquaporin (TC 1.A.8) family.

The protein localises to the cell membrane. It catalyses the reaction H2O(in) = H2O(out). The catalysed reaction is CO2(out) = CO2(in). Functionally, water channel required to facilitate the transport of water across membranes. Also mediates the transport of carbon dioxide across the membrane. The chain is Aquaporin-3 from Laccaria bicolor (Bicoloured deceiver).